Here is an 88-residue protein sequence, read N- to C-terminus: Small cysteine and glycine repeat-containing protein 1 (88 aa).

The segment at 4–72 (CGCGGCGGCG…TCSSCGYSCG (69 aa)) is 10 X 2 AA repeats of CG.

It belongs to the KRTAP type 28 family.

In the hair cortex, hair keratin intermediate filaments are embedded in an interfilamentous matrix, consisting of hair keratin-associated proteins (KRTAP), which are essential for the formation of a rigid and resistant hair shaft through their extensive disulfide bond cross-linking with abundant cysteine residues of hair keratins. The matrix proteins include the high-sulfur and high-glycine-tyrosine keratins. This is Small cysteine and glycine repeat-containing protein 1 from Homo sapiens (Human).